Here is a 330-residue protein sequence, read N- to C-terminus: MLDFLAITLSGKPPQVIQGETVNLKWQWLGEGILTLVPHRSYTQSVVISAGIHGNETAPIEILNQLVTDLLAGQLPLSVRLLVLLGNPPAIRKGKRYLSNDINRMFGGRYQHYTPSDETRRASTLEQRVMAFFQASHTSERLHYDLHTAIRGSYHPRFGLLPYQQTPYSAAMFRWLRDIELDALVMHTSAGGTFAHFSSERCQAASCTLELGKALPFGENQLSQFSAITQGLRSLVSDSALPARKTENMKYYRVVKSLLRQHPDFKLRVAEDTVNFTRFAQGTLLTEQPNDNYRVEHPYEWILFPNPHVALGLRAGMMLVKMCESELPIT.

3 residues coordinate Zn(2+): His-53, Glu-56, and His-147. The active site involves Glu-210.

It belongs to the AspA/AstE family. Succinylglutamate desuccinylase subfamily. Requires Zn(2+) as cofactor.

It catalyses the reaction N-succinyl-L-glutamate + H2O = L-glutamate + succinate. The protein operates within amino-acid degradation; L-arginine degradation via AST pathway; L-glutamate and succinate from L-arginine: step 5/5. Transforms N(2)-succinylglutamate into succinate and glutamate. The polypeptide is Succinylglutamate desuccinylase (Yersinia pseudotuberculosis serotype O:1b (strain IP 31758)).